The primary structure comprises 1035 residues: Beta-galactosidase (1035 aa).

The substrate site is built by asparagine 109 and aspartate 208. Aspartate 208 serves as a coordination point for Na(+). 3 residues coordinate Mg(2+): glutamate 424, histidine 426, and glutamate 469. Substrate contacts are provided by residues glutamate 469 and 545-548 (EYAH). The active-site Proton donor is the glutamate 469. The active-site Nucleophile is glutamate 545. Asparagine 605 provides a ligand contact to Mg(2+). Residues phenylalanine 609 and asparagine 612 each coordinate Na(+). Asparagine 612 and tryptophan 1011 together coordinate substrate.

The protein belongs to the glycosyl hydrolase 2 family. As to quaternary structure, homotetramer. Mg(2+) is required as a cofactor. It depends on Na(+) as a cofactor.

The catalysed reaction is Hydrolysis of terminal non-reducing beta-D-galactose residues in beta-D-galactosides.. The polypeptide is Beta-galactosidase (Klebsiella pneumoniae (strain 342)).